We begin with the raw amino-acid sequence, 927 residues long: MTANAELLQGSLFGDLEPQANAESCSETITRALRNDLSDQELVDESLKRPRNRHKPTSVPSIPLDSESQEQLETADNDNDLPAWAHHTLVDPEQLTPMLRHYVELKAKHPERILLYRLGDFFECFFEDAIQLSRLLELTLTGKEGGKGIGRVPMAGVPHHAAERYCTELIRHGLSVAICDQLETTPSKGALLKRDITRVLTPGTVLAEGMLTARRNNWLAAVVVEPAQGNQPFCWGLANADVSTGEFLVTQREGSAELHQHLAQLEASELIMAQKIGESSRPAWCPEQLFLTTMATTPFSQPEAERTLLNHYRLSTLDGLGLQEVPLALRAAGGLLTYLRDTQPLAENVDEGIAPMPLEHPLTVFAGDALVLDAQTRRNLELTSTQRDGQFQGSLLWAVDRTLTAMGARCLRRWIEAPLLDSKAIRARQAVVNHLVETRSLRHSLRRLLRPMGDLERLAGRAGAGHAGARELVAIADGIERLPRLAEQLHNALRSAPNWLDNLLTLDKSLPKLAASIREQLINNPPLSLSEGGLMHDNVDPLLDGLRNQLDDQDTWLAGQEVQERKLSGNPNLRLQYHRTFGYFLAVSKAKASMVPDHWIRRQTLANEERFITPDLKTREGQIFQLRARACQREYELFCQLREQVGKQATSIRKAARAVAGLDALVGLAEVAATGDYCCPEIDNSRELQLKTCRHPVVEQLLVERSFIPNDVELGKDIDLVVLTGPNASGKSCYLRQIGLIQLLAQVGSWVPAKQARVGIADRIFTRVGAVDDLAAGQSTFMVEMAETANILHHASDRSLVLLDEIGRGTATFDGLSIAWAVSEHLARDLRSRTVFATHYHELNGLSQELTNVANSQVLVEETGDDLVFLHQVAAGGANRSYGIEAARLAGVPDDVVQRARQVLAQLHDDDSSLPALLSAKTIKRQS.

The tract at residues 44-80 is disordered; the sequence is DESLKRPRNRHKPTSVPSIPLDSESQEQLETADNDND. Over residues 67–79 the composition is skewed to acidic residues; it reads ESQEQLETADNDN. ATP is bound at residue 725–732; that stretch reads GPNASGKS.

The protein belongs to the DNA mismatch repair MutS family.

Its function is as follows. This protein is involved in the repair of mismatches in DNA. It is possible that it carries out the mismatch recognition step. This protein has a weak ATPase activity. This Prochlorococcus marinus (strain MIT 9303) protein is DNA mismatch repair protein MutS.